The primary structure comprises 1168 residues: MEPITFTARKHLLSNEVSVDFGLQLVGSLPVHSLTTMPMLPWVVAEVRRLSRQSTRKEPVTKQVRLCVSPSGLRCEPEPGRSQQWDPLIYSSIFECKPQRVHKLIHNSHDPSYFACLIKEDAVHRQSICYVFKADDQTKVPEIISSIRQAGKIARQEELHCPSEFDDTFSKKFEVLFCGRVTVAHKKAPPALIDECIEKFNHVSGSRGSESPRPNPPHAAPTGSQEPVRRPMRKSFSQPGLRSLAFRKELQDGGLRSSGFFSSFEESDIENHLISGHNIVQPTDIEENRTMLFTIGQSEVYLISPDTKKIALEKNFKEISFCSQGIRHVDHFGFICRESSGGGGFHFVCYVFQCTNEALVDEIMMTLKQAFTVAAVQQTAKAPAQLCEGCPLQSLHKLCERIEGMNSSKTKLELQKHLTTLTNQEQATIFEEVQKLRPRNEQRENELIISFLRCLYEEKQKEHIHIGEMKQTSQMAAENIGSELPPSATRFRLDMLKNKAKRSLTESLESILSRGNKARGLQEHSISVDLDSSLSSTLSNTSKEPSVCEKEALPISESSFKLLGSSEDLSSDSESHLPEEPAPLSPQQAFRRRANTLSHFPIECQEPPQPARGSPGVSQRKLMRYHSVSTETPHERKDFESKANHLGDSGGTPVKTRRHSWRQQIFLRVATPQKACDSSSRYEDYSELGELPPRSPLEPVCEDGPFGPPPEEKKRTSRELRELWQKAILQQILLLRMEKENQKLQASENDLLNKRLKLDYEEITPCLKEVTTVWEKMLSTPGRSKIKFDMEKMHSAVGQGVPRHHRGEIWKFLAEQFHLKHQFPSKQQPKDVPYKELLKQLTSQQHAILIDLGRTFPTHPYFSAQLGAGQLSLYNILKAYSLLDQEVGYCQGLSFVAGILLLHMSEEEAFKMLKFLMFDMGLRKQYRPDMIILQIQMYQLSRLLHDYHRDLYNHLEEHEIGPSLYAAPWFLTMFASQFPLGFVARVFDMIFLQGTEVIFKVALSLLGSHKPLILQHENLETIVDFIKSTLPNLGLVQMEKTINQVFEMDIAKQLQAYEVEYHVLQEELIDSSPLSDNQRMDKLEKTNSSLRKQNLDLLEQLQVANGRIQSLEATIEKLLSSESKLKQAMLTLELERSALLQTVEELRRRSAEPSDREPECTQPEPTGD.

Ser146 is modified (phosphoserine). A disordered region spans residues 203 to 238 (VSGSRGSESPRPNPPHAAPTGSQEPVRRPMRKSFSQ). Ser235 is subject to Phosphoserine; by PKB/AKT1. Ser237 bears the Phosphoserine mark. Residues 246–404 (FRKELQDGGL…LHKLCERIEG (159 aa)) enclose the PID domain. Ser503 bears the Phosphoserine mark. Position 505 is a phosphothreonine; by PKB/AKT1 (Thr505). A phosphoserine mark is found at Ser507, Ser525, and Ser527. Low complexity predominate over residues 532 to 542 (SSLSSTLSNTS). Disordered regions lie at residues 532–551 (SSLS…CEKE) and 564–587 (GSSE…LSPQ). Ser565, Ser566, Ser570, Ser571, and Ser585 each carry phosphoserine. A Phosphothreonine modification is found at Thr596. Ser614 carries the post-translational modification Phosphoserine. Ser627 carries the phosphoserine; by PKB/AKT1 modification. 2 disordered regions span residues 628–658 (VSTE…KTRR) and 678–717 (SSSR…KRTS). Basic and acidic residues predominate over residues 632–645 (TPHERKDFESKANH). Ser695 and Ser941 each carry phosphoserine. Residues 800-994 (GVPRHHRGEI…RVFDMIFLQG (195 aa)) enclose the Rab-GAP TBC domain. Phosphotyrosine is present on Tyr952. Thr1131 is subject to Phosphothreonine. The segment covering 1145–1159 (ELRRRSAEPSDREPE) has biased composition (basic and acidic residues). The segment at 1145–1168 (ELRRRSAEPSDREPECTQPEPTGD) is disordered.

Interacts with APPL2 (via BAR domain); interaction is dependent of TBC1D1 phosphorylation at Ser-235; interaction diminishes the phosphorylation of TBC1D1 at Thr-596, resulting in inhibition of SLC2A4/GLUT4 translocation and glucose uptake. In terms of processing, insulin-stimulated phosphorylation by AKT family kinases stimulates SLC2A4/GLUT4 translocation.

The protein resides in the nucleus. May act as a GTPase-activating protein for Rab family protein(s). May play a role in the cell cycle and differentiation of various tissues. Involved in the trafficking and translocation of GLUT4-containing vesicles and insulin-stimulated glucose uptake into cells. This Homo sapiens (Human) protein is TBC1 domain family member 1 (TBC1D1).